The chain runs to 56 residues: MSKGTPSMGKRQKRTHAKCRRCGSVSLNIHTKQCTSCGFGRTSRMRSYQWQRKCKF.

Residues C19, C22, C34, and C37 each contribute to the Zn(2+) site. The C4-type zinc-finger motif lies at C19–C37.

The protein belongs to the eukaryotic ribosomal protein eL37 family. The cofactor is Zn(2+).

Functionally, binds to the 23S rRNA. This chain is Large ribosomal subunit protein eL37, found in Methanococcoides burtonii (strain DSM 6242 / NBRC 107633 / OCM 468 / ACE-M).